The primary structure comprises 377 residues: Nitric oxide reductase FlRd-NAD(+) reductase (377 aa).

Belongs to the FAD-dependent oxidoreductase family. FAD is required as a cofactor.

The protein localises to the cytoplasm. It carries out the reaction 2 reduced [nitric oxide reductase rubredoxin domain] + NAD(+) + H(+) = 2 oxidized [nitric oxide reductase rubredoxin domain] + NADH. It participates in nitrogen metabolism; nitric oxide reduction. Functionally, one of at least two accessory proteins for anaerobic nitric oxide (NO) reductase. Reduces the rubredoxin moiety of NO reductase. The protein is Nitric oxide reductase FlRd-NAD(+) reductase of Salmonella paratyphi A (strain AKU_12601).